Here is a 147-residue protein sequence, read N- to C-terminus: UPF0260 protein CJA_2436 (147 aa).

Belongs to the UPF0260 family.

This chain is UPF0260 protein CJA_2436, found in Cellvibrio japonicus (strain Ueda107) (Pseudomonas fluorescens subsp. cellulosa).